A 102-amino-acid chain; its full sequence is Lipopolysaccharide assembly protein A (102 aa).

The Cytoplasmic segment spans residues 1–2 (MK). A helical transmembrane segment spans residues 3-23 (YLLIFLLVLAIFVISVTLGAQ). At 24–43 (NDQQVTFNYLLAQGEYRIST) the chain is on the periplasmic side. Residues 44–64 (LLAVLFAAGFAIGWLICGLFW) form a helical membrane-spanning segment. The stretch at 64–92 (WLRVRVSLARAERKIKRLENQLSPATDVA) forms a coiled coil. At 65 to 102 (LRVRVSLARAERKIKRLENQLSPATDVAVVPHSSAAKE) the chain is on the cytoplasmic side.

This sequence belongs to the LapA family.

The protein localises to the cell inner membrane. In terms of biological role, involved in the assembly of lipopolysaccharide (LPS). The sequence is that of Lipopolysaccharide assembly protein A from Escherichia coli (strain K12).